The sequence spans 136 residues: MVKLGFVIAEFNRDITFMMEKLADEHAEFLGAEVPYKVMVPGVYDMPVPIKRLLEKEDVDAVITIGCVIEGDTEHDEIVVHNAARKITDLSLQYDKPVALGISGPGMTRMQAERRIDYGRKAVESAVKMVKRLNDL.

Residues F11, 43–45, and 67–69 contribute to the 5-amino-6-(D-ribitylamino)uracil site; these read VYD and CVI. 72–73 lines the (2S)-2-hydroxy-3-oxobutyl phosphate pocket; sequence DT. H75 functions as the Proton donor in the catalytic mechanism. A 5-amino-6-(D-ribitylamino)uracil-binding site is contributed by L100. Residue R115 participates in (2S)-2-hydroxy-3-oxobutyl phosphate binding.

This sequence belongs to the DMRL synthase family. In terms of assembly, forms an icosahedral capsid composed of 60 subunits, arranged as a dodecamer of pentamers.

The catalysed reaction is (2S)-2-hydroxy-3-oxobutyl phosphate + 5-amino-6-(D-ribitylamino)uracil = 6,7-dimethyl-8-(1-D-ribityl)lumazine + phosphate + 2 H2O + H(+). It participates in cofactor biosynthesis; riboflavin biosynthesis; riboflavin from 2-hydroxy-3-oxobutyl phosphate and 5-amino-6-(D-ribitylamino)uracil: step 1/2. Catalyzes the formation of 6,7-dimethyl-8-ribityllumazine by condensation of 5-amino-6-(D-ribitylamino)uracil with 3,4-dihydroxy-2-butanone 4-phosphate. This is the penultimate step in the biosynthesis of riboflavin. The sequence is that of 6,7-dimethyl-8-ribityllumazine synthase from Methanococcus aeolicus (strain ATCC BAA-1280 / DSM 17508 / OCM 812 / Nankai-3).